A 267-amino-acid chain; its full sequence is 2-keto-3-deoxy-L-rhamnonate aldolase (267 aa).

Residue His49 is the Proton acceptor of the active site. Residue Gln151 coordinates substrate. Residue Glu153 participates in Mg(2+) binding. Substrate contacts are provided by Ala178 and Asp179. Residue Asp179 coordinates Mg(2+).

This sequence belongs to the HpcH/HpaI aldolase family. KDR aldolase subfamily. As to quaternary structure, homohexamer. Requires Mg(2+) as cofactor.

The catalysed reaction is 2-dehydro-3-deoxy-L-rhamnonate = (S)-lactaldehyde + pyruvate. Its function is as follows. Catalyzes the reversible retro-aldol cleavage of 2-keto-3-deoxy-L-rhamnonate (KDR) to pyruvate and lactaldehyde. The sequence is that of 2-keto-3-deoxy-L-rhamnonate aldolase from Salmonella dublin (strain CT_02021853).